The sequence spans 185 residues: MTKEIIKDAEERMKKAVEVFRQELAGMRANRATPALLDKVRVEAYGSEVPVNNVATIEVPDPRTLVIKPWDRSLIKAIERAINASDLGLNPTNDGQVIRLSIPPMTEERRRELVKVVAKRTEEQRVAIRNIRRDANEQIKKLEKDKAVSEDESKRAQDEVQKLTDKYIKEVDQLMAAKEKEIMEV.

It belongs to the RRF family.

It is found in the cytoplasm. In terms of biological role, responsible for the release of ribosomes from messenger RNA at the termination of protein biosynthesis. May increase the efficiency of translation by recycling ribosomes from one round of translation to another. The sequence is that of Ribosome-recycling factor from Symbiobacterium thermophilum (strain DSM 24528 / JCM 14929 / IAM 14863 / T).